Reading from the N-terminus, the 176-residue chain is Avian agnoprotein 1a (176 aa).

Disordered stretches follow at residues Met1 to Glu85 and Val116 to Arg176. The segment covering Tyr75–Glu85 has biased composition (basic and acidic residues). Positions Asp76–Ala119 form a coiled coil. A compositionally biased stretch (low complexity) spans Thr137–Ser161.

As to quaternary structure, interacts with VP1.

The protein resides in the virion. It is found in the host nucleus. The chain is Avian agnoprotein 1a from Budgerigar fledgling disease virus (BFPyV).